The sequence spans 745 residues: 1,4-alpha-glucan branching enzyme GlgB (745 aa).

Asp-416 serves as the catalytic Nucleophile. Catalysis depends on Glu-469, which acts as the Proton donor.

It belongs to the glycosyl hydrolase 13 family. GlgB subfamily. As to quaternary structure, monomer.

It catalyses the reaction Transfers a segment of a (1-&gt;4)-alpha-D-glucan chain to a primary hydroxy group in a similar glucan chain.. Its pathway is glycan biosynthesis; glycogen biosynthesis. Catalyzes the formation of the alpha-1,6-glucosidic linkages in glycogen by scission of a 1,4-alpha-linked oligosaccharide from growing alpha-1,4-glucan chains and the subsequent attachment of the oligosaccharide to the alpha-1,6 position. This Shewanella sp. (strain MR-4) protein is 1,4-alpha-glucan branching enzyme GlgB.